Consider the following 322-residue polypeptide: Deoxyhypusine hydroxylase (322 aa).

HEAT-like PBS-type repeat units follow at residues 76-102 (LKHE…VLAD) and 109-135 (VRHE…YFKE). Positions 78, 79, 111, 112, 236, 237, 269, and 270 each coordinate Fe cation. The stretch at 267-293 (VRHEAAEALGSIATDDVLPVLKEHLKD) is one HEAT-like PBS-type 3 repeat.

The protein belongs to the deoxyhypusine hydroxylase family. Requires Fe(2+) as cofactor.

Its subcellular location is the cytoplasm. The protein resides in the nucleus. The catalysed reaction is [eIF5A protein]-deoxyhypusine + AH2 + O2 = [eIF5A protein]-hypusine + A + H2O. It functions in the pathway protein modification; eIF5A hypusination. Its function is as follows. Catalyzes the hydroxylation of the N(6)-(4-aminobutyl)-L-lysine intermediate to form hypusine, an essential post-translational modification only found in mature eIF-5A factor. This Kluyveromyces lactis (strain ATCC 8585 / CBS 2359 / DSM 70799 / NBRC 1267 / NRRL Y-1140 / WM37) (Yeast) protein is Deoxyhypusine hydroxylase.